Reading from the N-terminus, the 649-residue chain is MSGVRAVRISIESACEKQVQEVGLDGTETYLQPLSMSQNLARLAQRIDFSQGSGSEEEEAAGPDGDAPDWGGAGADQDDEEGLVKFQPSLWPWDSVRNNLRSALTEMCVLYDVLSIVRDKKFMTLDPVSQDALPPKQSPQTLQLISKKKSLAGAAQILLKGAERLTKSVAENQENKLQRDFNSELLRLRQHWKLRKVGDKILGDLSYRSAGSLFPHHGTFEVIKNTDIDLDKKIPEDYCPLDVQIPSDLEGSAYIKVSIQKQAPDIGDLGTVNLFKRPLPKSKPGSPHWQTKLEAAQNVLLCKEIFAQLSREAVQIKSQIPHIVVKNQIISQPFPSLQLSISLCHSSDDKKSQKCAAEKPGQEDHLYVLEHNLHLLIREFHKQTLSSIVMPHPASAPFGHKRMRLSGPQAFDKNEINSIQSTEGLLEKIIKQAKHIFLRSRTAATIDSLASRIEDPQIQAHWSNINDVYESSVKVLITSQGYEQICKSIQLQLNIGVEQVRVVHRDGRVIMLSHQEQELQDFLLSQMSQHQVHAVQQLAKVMGWQVLSFSNHVGLGPIESIGNASAITVASPSGDYAISVRNGPESGSKIMVQFPRNQCKDLPKSDVLQDSKWSHLRGPFKEVQWNKMEGRNFVYKMELLMSALSPCLL.

The segment at 51–79 (QGSGSEEEEAAGPDGDAPDWGGAGADQDD) is disordered.

It belongs to the Mediator complex subunit 17 family. Component of the Mediator complex, which is composed of MED1, MED4, MED6, MED7, MED8, MED9, MED10, MED11, MED12, MED13, MED13L, MED14, MED15, MED16, MED17, MED18, MED19, MED20, MED21, MED22, MED23, MED24, MED25, MED26, MED27, MED29, MED30, MED31, CCNC, CDK8 and CDC2L6/CDK11. The MED12, MED13, CCNC and CDK8 subunits form a distinct module termed the CDK8 module. Mediator containing the CDK8 module is less active than Mediator lacking this module in supporting transcriptional activation. Individual preparations of the Mediator complex lacking one or more distinct subunits have been variously termed ARC, CRSP, DRIP, PC2, SMCC and TRAP. Interacts with STAT2. Interacts with GATA1 and PPARG.

The protein resides in the nucleus. In terms of biological role, component of the Mediator complex, a coactivator involved in the regulated transcription of nearly all RNA polymerase II-dependent genes. Mediator functions as a bridge to convey information from gene-specific regulatory proteins to the basal RNA polymerase II transcription machinery. Mediator is recruited to promoters by direct interactions with regulatory proteins and serves as a scaffold for the assembly of a functional preinitiation complex with RNA polymerase II and the general transcription factors. The sequence is that of Mediator of RNA polymerase II transcription subunit 17 (Med17) from Mus musculus (Mouse).